We begin with the raw amino-acid sequence, 696 residues long: MSEHHSDTRDDLDESKFVTFEGSPFQLYQPYPPSGDQPTAIATLVEGVEDGLSFQTLLGVTGSGKTYTMANTIARLGRPAIVFAPNKTLAAQLYAEFREFFPRNAVEYFVSYYDYYQPEAYVPQRDLFIEKDSSINEHIEQMRLSATKSLMERRDVVIVATVSAIYGIGNPSEYHQMILTLRTGDKIGQREVIARLIAMQYTRNEQDFQRGTFRVRGDTIDIFPAEHAEMAVRVELFDDEVDTLHLFDPLTGRVRQKIPRFTVYPSSHYVTPRETVMRAVETIKDELRERLEFFHRDGKLVEAQRLEQRTRFDLEMLQELGFCKGIENYSRHFSGAAPGEPPPTLVDYLPPDALMLLDESHVLIGQLNGMYNGDRARKENLVDYGFRLPSALDNRPLKFPEFERKMRQVVFVSATPADYEQRVSGQTAEQVVRPTGLVDPQIEVRPASTQVDDVLSEITERVKANERVLITVLTKRMAEQLTEFLADHGVKVRYLHSDIDTVERVEIIRDLRLGTFDVLVGINLLREGLDIPEVSLVAILDADKEGFLRAERSLIQTIGRAARNVNGKALLYADRITDSMRRAIDETERRRAKQIAYNEKMGITPRGVVKRIKDIIDGVYNADEARAELKEAQQRAKFEDMSEKQIAKEIKRLEKQMADYAKNLEFEKAAQTRDQLALLRERVFGANVGDHVSGGE.

One can recognise a Helicase ATP-binding domain in the interval 46–433; it reads EGVEDGLSFQ…SGQTAEQVVR (388 aa). 59–66 is a binding site for ATP; sequence GVTGSGKT. The short motif at 112–135 is the Beta-hairpin element; it reads YYDYYQPEAYVPQRDLFIEKDSSI. The region spanning 450 to 616 is the Helicase C-terminal domain; it reads QVDDVLSEIT…GVVKRIKDII (167 aa). The region spanning 647-682 is the UVR domain; the sequence is AKEIKRLEKQMADYAKNLEFEKAAQTRDQLALLRER.

This sequence belongs to the UvrB family. Forms a heterotetramer with UvrA during the search for lesions. Interacts with UvrC in an incision complex.

The protein localises to the cytoplasm. The UvrABC repair system catalyzes the recognition and processing of DNA lesions. A damage recognition complex composed of 2 UvrA and 2 UvrB subunits scans DNA for abnormalities. Upon binding of the UvrA(2)B(2) complex to a putative damaged site, the DNA wraps around one UvrB monomer. DNA wrap is dependent on ATP binding by UvrB and probably causes local melting of the DNA helix, facilitating insertion of UvrB beta-hairpin between the DNA strands. Then UvrB probes one DNA strand for the presence of a lesion. If a lesion is found the UvrA subunits dissociate and the UvrB-DNA preincision complex is formed. This complex is subsequently bound by UvrC and the second UvrB is released. If no lesion is found, the DNA wraps around the other UvrB subunit that will check the other stand for damage. The protein is UvrABC system protein B of Burkholderia mallei (strain ATCC 23344).